A 663-amino-acid polypeptide reads, in one-letter code: Cytochrome bo(3) ubiquinol oxidase subunit 1 (663 aa).

The Periplasmic segment spans residues 1–16 (MFGKLSLDAVPFHEPI). The helical transmembrane segment at 17–35 (VMVTIAGIILGGLALVGLI) threads the bilayer. The Cytoplasmic portion of the chain corresponds to 36–52 (TYFGKWTYLWKEWLTSV). The helical transmembrane segment at 53-80 (DHKRLGIMYIIVAIVMLLRGFADAIMMR) threads the bilayer. Ubiquinone-8-binding residues include R71 and D75. At 81 to 95 (SQQALASAGEAGFLP) the chain is on the periplasmic side. Residues 96-132 (PHHYDQIFTAHGVIMIFFVAMPFVIGLMNLVVPLQIG) form a helical membrane-spanning segment. Position 98 (H98) interacts with ubiquinone-8. Heme b is bound at residue H106. At 133 to 137 (ARDVA) the chain is on the cytoplasmic side. Residues 138–161 (FPFLNNLSFWFTVVGVILVNVSLG) traverse the membrane as a helical segment. Residues 162–184 (VGEFAQTGWLAYPPLSGIEYSPG) lie on the Periplasmic side of the membrane. W170 lines the heme b pocket. Residues 185-215 (VGVDYWIWSLQLSGIGTTLTGINFFVTILKM) form a helical membrane-spanning segment. The Cytoplasmic segment spans residues 216–224 (RAPGMTMFK). Residues 225–260 (MPVFTWASLCANVLIIASFPILTVTVALLTLDRYLG) traverse the membrane as a helical segment. Topologically, residues 261–270 (THFFTNDMGG) are periplasmic. A helical membrane pass occupies residues 271-307 (NMMMYINLIWAWGHPEVYILILPVFGVFSEIAATFSR). Cu(2+) is bound at residue H284. A cross-link (1'-histidyl-3'-tyrosine (His-Tyr)) is located at residues 284–288 (HPEVY). Fe(II)-heme o is bound at residue Y288. At 308–311 (KRLF) the chain is on the cytoplasmic side. Residues 312 to 326 (GYTSLVWATVCITVL) form a helical membrane-spanning segment. The Periplasmic portion of the chain corresponds to 327-340 (SFIVWLHHFFTMGA). Cu(2+) is bound by residues H333 and H334. A helical transmembrane segment spans residues 341 to 369 (GANVNAFFGITTMIIAIPTGVKIFNWLFT). Residues 370 to 377 (MYQGRIVF) are Cytoplasmic-facing. A helical transmembrane segment spans residues 378-409 (HSAMLWTIGFIVTFSVGGMTGVLLAVPGADFV). The Periplasmic portion of the chain corresponds to 410 to 412 (LHN). Fe(II)-heme o contacts are provided by H411 and H419. A helical membrane pass occupies residues 413–445 (SLFLIAHFHNVIIGGVVFGCFAGMTYWWPKAFG). A heme b-binding site is contributed by H421. Over 446 to 448 (FKL) the chain is Cytoplasmic. A helical transmembrane segment spans residues 449-477 (NETWGKRAFWFWIIGFFVAFMPLYALGFM). The Periplasmic portion of the chain corresponds to 478–489 (GMTRRLSQQIDP). Heme b is bound by residues R481 and R482. A helical membrane pass occupies residues 490 to 521 (QFHTMLMIAASGAVLIALGILCLVIQMYVSIR). At 522–587 (DRDQNRDLTG…DHYEEIHMPK (66 aa)) the chain is on the cytoplasmic side. Residues 588-606 (NSGAGIVIAAFSTIFGFAM) traverse the membrane as a helical segment. Over 607–613 (IWHIWWL) the chain is Periplasmic. A helical transmembrane segment spans residues 614-632 (AIVGFAGMIITWIVKSFDE). Residues 633-663 (DVDYYVPVAEIEKLENQHFDEITKAGLKNGN) are Cytoplasmic-facing.

It belongs to the heme-copper respiratory oxidase family. The cytochrome bo(3) ubiquinol oxidase complex is a heterooctamer of two A chains, two B chains, two C chains and two D chains. The cofactor is Cu(2+). Heme b is required as a cofactor. It depends on Fe(II)-heme o as a cofactor.

The protein resides in the cell inner membrane. It catalyses the reaction 2 a ubiquinol + O2 + n H(+)(in) = 2 a ubiquinone + 2 H2O + n H(+)(out). Its function is as follows. Cytochrome bo(3) ubiquinol oxidase is the terminal enzyme in the aerobic respiratory chain of E.coli that predominates when cells are grown at high aeration. Catalyzes the four-electron reduction of O2 to water, using a ubiquinol as a membrane soluble electron donor for molecular oxygen reduction; ubiquinol-8 is the natural substrate for E.coli. Has proton pump activity across the membrane in addition to electron transfer, pumping 2 protons/electron and generating a proton motive force. All the redox centers of this enzyme complex are located within the largest subunit, subunit I. Protons are probably pumped via D- and K- channels found in this subunit. This Escherichia coli O157:H7 protein is Cytochrome bo(3) ubiquinol oxidase subunit 1 (cyoB).